The sequence spans 447 residues: Chitobiosyldiphosphodolichol beta-mannosyltransferase (447 aa).

Residues 1 to 8 (MSVFGFDN) are Lumenal-facing. The helical transmembrane segment at 9 to 29 (IPTWLWWLLAIYLATPFVLYV) threads the bilayer. The Cytoplasmic portion of the chain corresponds to 30–127 (VQPYLFYEGK…LCSMFWKLRA (98 aa)). Positions 128–148 (VDYILLQNPPTIPILPIAVVV) form an intramembrane region, helical. Topologically, residues 149 to 447 (KTFSRAKLII…ALSELKIIHK (299 aa)) are lumenal.

It belongs to the glycosyltransferase group 1 family.

The protein localises to the endoplasmic reticulum membrane. It carries out the reaction an N,N'-diacetylchitobiosyl-diphospho-di-trans,poly-cis-dolichol + GDP-alpha-D-mannose = a beta-D-Man-(1-&gt;4)-beta-D-GlcNAc-(1-&gt;4)-alpha-D-GlcNAc-diphospho-di-trans,poly-cis-dolichol + GDP + H(+). The protein operates within protein modification; protein glycosylation. In terms of biological role, participates in the formation of the lipid-linked precursor oligosaccharide for N-glycosylation. Involved in assembling the dolichol-pyrophosphate-GlcNAc(2)-Man(5) intermediate on the cytoplasmic surface of the ER. The sequence is that of Chitobiosyldiphosphodolichol beta-mannosyltransferase (ALG1) from Kluyveromyces lactis (strain ATCC 8585 / CBS 2359 / DSM 70799 / NBRC 1267 / NRRL Y-1140 / WM37) (Yeast).